A 1807-amino-acid polypeptide reads, in one-letter code: Vitellogenin-A2 (1807 aa).

The N-terminal stretch at 1–15 is a signal peptide; sequence MKGIVLALLLALAGS. The region spanning 24–664 is the Vitellogenin domain; sequence FSESKISVYN…SANTMFPVFI (641 aa). The segment at 953 to 974 is disordered; that stretch reads TSAEGASMMEDSSEMGPKKYSA. N1094 carries an N-linked (GlcNAc...) asparagine glycan. Positions 1095–1320 are disordered; the sequence is ETALYRSKQK…SSESSSSSSE (226 aa). Residues 1101–1111 show a composition bias toward basic residues; sequence SKQKKKNKIHN. Residues 1112–1123 show a composition bias toward basic and acidic residues; that stretch reads RRLDAEVVEARK. Low complexity predominate over residues 1126-1163; the sequence is SSLSSSSSSSSSSSSSSSSSSSSSSSSSPSSSSSSSYS. A compositionally biased stretch (basic and acidic residues) spans 1187–1198; it reads QNKKRNLQENRK. Residues 1205–1232 show a composition bias toward low complexity; the sequence is SSSSSSSSSSSSSSSSSSSSSSSSSSSS. A compositionally biased stretch (basic and acidic residues) spans 1233–1247; the sequence is EENRPHKNRQHDNKQ. Composition is skewed to low complexity over residues 1263–1276 and 1309–1320; these read SESS…SSSE and SSSSESSSSSSE. The VWFD domain occupies 1536 to 1714; it reads GECKVAQDQI…SWILPAESCS (179 aa). Disulfide bonds link C1538/C1677 and C1561/C1713.

As to expression, produced by the liver, secreted into the blood and then sequestered by receptor mediated endocytosis into growing oocytes, where it is generally cleaved, giving rise to the respective yolk components.

Its function is as follows. Precursor of the major egg-yolk proteins that are sources of nutrients during early development of oviparous organisms. This chain is Vitellogenin-A2, found in Xenopus laevis (African clawed frog).